We begin with the raw amino-acid sequence, 1353 residues long: Inhibitor of Bruton tyrosine kinase (1353 aa).

ANK repeat units lie at residues 51–80 (FGRN…DLLV) and 85–114 (SGWT…SLYI). RCC1 repeat units follow at residues 141–194 (PTDV…FLSQ), 195–246 (KGQV…VLTE), and 248–301 (GCVY…LWTR). 2 consecutive BTB domains span residues 564–644 (HDVT…DFLT) and 768–836 (CDVT…VVIK). One copy of the ANK 3 repeat lies at 806–835 (SSCAALEMPIHSDILKVILDYLYTDEAVVI). Positions 970-1001 (HSETMFKKAKTKAKKKPRKRSDSSGGYNLSDI) are disordered. Residues 976-988 (KKAKTKAKKKPRK) are compositionally biased toward basic residues. S990 is modified (phosphoserine). Residues 992–1001 (SSGGYNLSDI) are compositionally biased toward polar residues. A phosphoserine mark is found at S1004, S1030, S1033, S1039, S1045, S1054, S1083, S1111, S1113, and S1116. Residues 1134 to 1155 (KCGATPKSHLGKTVSHGVKLSQ) are disordered.

As to quaternary structure, interacts with the PH domain of BTK. Isoform 2 does not interact with BTK. Expressed in DeFew, HEK293T, HeLa and in Jurkat, MC3 and NB4 lymphoid cells (at protein level). Isoform 1 is the predominant isoform expressed in all examined tissues and cell lines. Highly expressed in hemopoietic tissues (fetal liver, spleen, lymph node, thymus, peripheral blood leukocytes and bone marrow). Weakly or not expressed in other tissues.

It localises to the cytoplasm. The protein resides in the membrane. The protein localises to the nucleus. Acts as an inhibitor of BTK tyrosine kinase activity, thereby playing a role in B-cell development. Down-regulates BTK kinase activity, leading to interference with BTK-mediated calcium mobilization and NF-kappa-B-driven transcription. The sequence is that of Inhibitor of Bruton tyrosine kinase (IBTK) from Homo sapiens (Human).